Here is a 205-residue protein sequence, read N- to C-terminus: Probable GTP-binding protein EngB (205 aa).

The EngB-type G domain maps to 27–201 (QGMEVAFAGR…QNKLNAWFSG (175 aa)). GTP is bound by residues 35–42 (GRSNAGKS), 62–66 (GRTQL), 80–83 (DLPG), 147–150 (TKVD), and 180–182 (FSS). Mg(2+) contacts are provided by Ser-42 and Thr-64.

This sequence belongs to the TRAFAC class TrmE-Era-EngA-EngB-Septin-like GTPase superfamily. EngB GTPase family. Mg(2+) serves as cofactor.

Functionally, necessary for normal cell division and for the maintenance of normal septation. This is Probable GTP-binding protein EngB from Hamiltonella defensa subsp. Acyrthosiphon pisum (strain 5AT).